We begin with the raw amino-acid sequence, 459 residues long: Ribulose bisphosphate carboxylase large chain (459 aa).

The residue at position 4 (Lys-4) is an N6,N6,N6-trimethyllysine. Residues Asn-113 and Thr-163 each contribute to the substrate site. The active-site Proton acceptor is Lys-165. Lys-167 contacts substrate. Residues Lys-191, Asp-193, and Glu-194 each coordinate Mg(2+). Residue Lys-191 is modified to N6-carboxylysine. Residue His-284 is the Proton acceptor of the active site. The substrate site is built by Arg-285, His-317, and Ser-369.

It belongs to the RuBisCO large chain family. Type I subfamily. As to quaternary structure, heterohexadecamer of 8 large chains and 8 small chains; disulfide-linked. The disulfide link is formed within the large subunit homodimers. Mg(2+) serves as cofactor. In terms of processing, the disulfide bond which can form in the large chain dimeric partners within the hexadecamer appears to be associated with oxidative stress and protein turnover.

The protein resides in the plastid. Its subcellular location is the chloroplast. It catalyses the reaction 2 (2R)-3-phosphoglycerate + 2 H(+) = D-ribulose 1,5-bisphosphate + CO2 + H2O. The enzyme catalyses D-ribulose 1,5-bisphosphate + O2 = 2-phosphoglycolate + (2R)-3-phosphoglycerate + 2 H(+). Functionally, ruBisCO catalyzes two reactions: the carboxylation of D-ribulose 1,5-bisphosphate, the primary event in carbon dioxide fixation, as well as the oxidative fragmentation of the pentose substrate in the photorespiration process. Both reactions occur simultaneously and in competition at the same active site. The chain is Ribulose bisphosphate carboxylase large chain from Apium graveolens (Celery).